The following is a 354-amino-acid chain: Uroporphyrinogen decarboxylase (354 aa).

Residues 27 to 31 (RQAGR), aspartate 77, tyrosine 154, threonine 209, and histidine 327 contribute to the substrate site.

Belongs to the uroporphyrinogen decarboxylase family. Homodimer.

The protein localises to the cytoplasm. It carries out the reaction uroporphyrinogen III + 4 H(+) = coproporphyrinogen III + 4 CO2. It participates in porphyrin-containing compound metabolism; protoporphyrin-IX biosynthesis; coproporphyrinogen-III from 5-aminolevulinate: step 4/4. Functionally, catalyzes the decarboxylation of four acetate groups of uroporphyrinogen-III to yield coproporphyrinogen-III. The sequence is that of Uroporphyrinogen decarboxylase from Salmonella newport (strain SL254).